A 111-amino-acid polypeptide reads, in one-letter code: Vacuolar ATPase assembly integral membrane protein VMA21 (111 aa).

The Cytoplasmic segment spans residues 1 to 39; it reads MATRRIVATEKSILEKDDHIGSSPAAGEKSNITPAVPLD. Residues 40-60 traverse the membrane as a helical segment; that stretch reads VILKLLAFTLAMVVIPIGSYF. At 61-73 the chain is on the lumenal side; the sequence is VTVNSIFKGNSTY. Residues 74-94 traverse the membrane as a helical segment; it reads AGALAAIMANVVLVAYVVVAM. At 95-111 the chain is on the cytoplasmic side; it reads NEDQTEQEKAKEGKKDR. Residues 108 to 111 carry the Prevents secretion from ER motif; it reads KKDR.

It belongs to the VMA21 family.

Its subcellular location is the endoplasmic reticulum membrane. It localises to the endoplasmic reticulum-Golgi intermediate compartment membrane. The protein localises to the cytoplasmic vesicle. The protein resides in the COPII-coated vesicle membrane. In terms of biological role, required for the assembly of the V0 complex of the vacuolar ATPase (V-ATPase) in the endoplasmic reticulum. The polypeptide is Vacuolar ATPase assembly integral membrane protein VMA21 (Pyricularia oryzae (strain 70-15 / ATCC MYA-4617 / FGSC 8958) (Rice blast fungus)).